Consider the following 203-residue polypeptide: Holliday junction branch migration complex subunit RuvA (203 aa).

Residues 1–64 (MIGRLRGIIL…EDAQLLYGFN (64 aa)) are domain I. The tract at residues 65 to 142 (NKQERTLFKE…KGLHGDLFTP (78 aa)) is domain II. Residues 143-154 (AADLVLTSPAGP) form a flexible linker region. The segment at 155 to 203 (TADDAEQEAVAALVALGYKPQEASRMVSKIARPDANSETLIREALRAAL) is domain III.

This sequence belongs to the RuvA family. Homotetramer. Forms an RuvA(8)-RuvB(12)-Holliday junction (HJ) complex. HJ DNA is sandwiched between 2 RuvA tetramers; dsDNA enters through RuvA and exits via RuvB. An RuvB hexamer assembles on each DNA strand where it exits the tetramer. Each RuvB hexamer is contacted by two RuvA subunits (via domain III) on 2 adjacent RuvB subunits; this complex drives branch migration. In the full resolvosome a probable DNA-RuvA(4)-RuvB(12)-RuvC(2) complex forms which resolves the HJ.

It is found in the cytoplasm. Functionally, the RuvA-RuvB-RuvC complex processes Holliday junction (HJ) DNA during genetic recombination and DNA repair, while the RuvA-RuvB complex plays an important role in the rescue of blocked DNA replication forks via replication fork reversal (RFR). RuvA specifically binds to HJ cruciform DNA, conferring on it an open structure. The RuvB hexamer acts as an ATP-dependent pump, pulling dsDNA into and through the RuvAB complex. HJ branch migration allows RuvC to scan DNA until it finds its consensus sequence, where it cleaves and resolves the cruciform DNA. This is Holliday junction branch migration complex subunit RuvA from Klebsiella pneumoniae (strain 342).